Here is a 243-residue protein sequence, read N- to C-terminus: Homeobox protein goosecoid isoform A (243 aa).

Residues 148 to 207 (KRRHRTIFTDEQLEALENLFQETKYPDVGTREQLARRVHLREEKVEVWFKNRRAKWRRQK) constitute a DNA-binding region (homeobox). Residues 201-243 (AKWRRQKRSSSEESENAQKWNKSSKNSAEKADEQVKSDLDSDS) form a disordered region. A compositionally biased stretch (polar residues) spans 217–226 (AQKWNKSSKN). The segment covering 227–243 (SAEKADEQVKSDLDSDS) has biased composition (basic and acidic residues).

It belongs to the paired homeobox family. Bicoid subfamily. In terms of tissue distribution, at the start of gastrulation, it is found in a patch of cells encompassing 60 degrees of arc on the dorsal marginal zone.

Its subcellular location is the nucleus. Functionally, plays a central role in executing Spemann's organizer phenomenon (the dorsal blastopore lip of the early Xenopus laevis gastrula can organize a complete secondary body axis when transplanted to another embryo). In Xenopus laevis (African clawed frog), this protein is Homeobox protein goosecoid isoform A (gsc-a).